The following is a 69-amino-acid chain: DNA-directed RNA polymerase subunit epsilon (69 aa).

It belongs to the RNA polymerase subunit epsilon family. As to quaternary structure, RNAP is composed of a core of 2 alpha, a beta and a beta' subunit. The core is associated with a delta subunit, and at least one of epsilon or omega. When a sigma factor is associated with the core the holoenzyme is formed, which can initiate transcription.

The catalysed reaction is RNA(n) + a ribonucleoside 5'-triphosphate = RNA(n+1) + diphosphate. Its function is as follows. A non-essential component of RNA polymerase (RNAP). This is DNA-directed RNA polymerase subunit epsilon from Halalkalibacterium halodurans (strain ATCC BAA-125 / DSM 18197 / FERM 7344 / JCM 9153 / C-125) (Bacillus halodurans).